A 330-amino-acid polypeptide reads, in one-letter code: Glycerol-3-phosphate dehydrogenase [NAD(P)+] (330 aa).

Residues Ser11, Phe12, Arg32, and Lys106 each coordinate NADPH. Sn-glycerol 3-phosphate is bound by residues Lys106, Gly133, and Ser135. Ala137 lines the NADPH pocket. Lys188, Asp241, Ser251, Arg252, and Asn253 together coordinate sn-glycerol 3-phosphate. Residue Lys188 is the Proton acceptor of the active site. Arg252 lines the NADPH pocket. Residues Val276 and Glu278 each coordinate NADPH.

The protein belongs to the NAD-dependent glycerol-3-phosphate dehydrogenase family.

Its subcellular location is the cytoplasm. The enzyme catalyses sn-glycerol 3-phosphate + NAD(+) = dihydroxyacetone phosphate + NADH + H(+). It catalyses the reaction sn-glycerol 3-phosphate + NADP(+) = dihydroxyacetone phosphate + NADPH + H(+). Its pathway is membrane lipid metabolism; glycerophospholipid metabolism. Catalyzes the reduction of the glycolytic intermediate dihydroxyacetone phosphate (DHAP) to sn-glycerol 3-phosphate (G3P), the key precursor for phospholipid synthesis. This is Glycerol-3-phosphate dehydrogenase [NAD(P)+] from Clostridium botulinum (strain Eklund 17B / Type B).